The sequence spans 263 residues: Probable methylthioribulose-1-phosphate dehydratase (263 aa).

C102 contacts substrate. Residues H120 and H122 each coordinate Zn(2+). E144 acts as the Proton donor/acceptor in catalysis. H200 contributes to the Zn(2+) binding site.

This sequence belongs to the aldolase class II family. MtnB subfamily. Requires Zn(2+) as cofactor.

Its subcellular location is the cytoplasm. It catalyses the reaction 5-(methylsulfanyl)-D-ribulose 1-phosphate = 5-methylsulfanyl-2,3-dioxopentyl phosphate + H2O. The protein operates within amino-acid biosynthesis; L-methionine biosynthesis via salvage pathway; L-methionine from S-methyl-5-thio-alpha-D-ribose 1-phosphate: step 2/6. Catalyzes the dehydration of methylthioribulose-1-phosphate (MTRu-1-P) into 2,3-diketo-5-methylthiopentyl-1-phosphate (DK-MTP-1-P). The sequence is that of Probable methylthioribulose-1-phosphate dehydratase from Caenorhabditis elegans.